The sequence spans 651 residues: Acetyl-coenzyme A synthetase (651 aa).

CoA-binding positions include 191-194 (RGGK), Thr311, and Asn335. Residues 387 to 389 (GEP), 411 to 416 (DTWWQT), Asp500, and Arg515 each bind ATP. Ser523 is a CoA binding site. Residue Arg526 participates in ATP binding. Residues Val537, His539, and Val542 each coordinate Mg(2+). Residue Arg584 coordinates CoA. Lys609 is subject to N6-acetyllysine.

Belongs to the ATP-dependent AMP-binding enzyme family. The cofactor is Mg(2+). Acetylated. Deacetylation by the SIR2-homolog deacetylase activates the enzyme.

It catalyses the reaction acetate + ATP + CoA = acetyl-CoA + AMP + diphosphate. In terms of biological role, catalyzes the conversion of acetate into acetyl-CoA (AcCoA), an essential intermediate at the junction of anabolic and catabolic pathways. AcsA undergoes a two-step reaction. In the first half reaction, AcsA combines acetate with ATP to form acetyl-adenylate (AcAMP) intermediate. In the second half reaction, it can then transfer the acetyl group from AcAMP to the sulfhydryl group of CoA, forming the product AcCoA. The chain is Acetyl-coenzyme A synthetase from Pseudomonas syringae pv. syringae (strain B728a).